The primary structure comprises 267 residues: 4-hydroxy-tetrahydrodipicolinate reductase (267 aa).

10 to 15 (GCLGKQ) is an NAD(+) binding site. Arg-37 contacts NADP(+). Residues 99 to 101 (GTT) and 122 to 125 (TTNV) each bind NAD(+). The active-site Proton donor/acceptor is His-154. His-155 lines the (S)-2,3,4,5-tetrahydrodipicolinate pocket. Lys-158 functions as the Proton donor in the catalytic mechanism. 164-165 (GT) contacts (S)-2,3,4,5-tetrahydrodipicolinate.

This sequence belongs to the DapB family.

The protein resides in the cytoplasm. The enzyme catalyses (S)-2,3,4,5-tetrahydrodipicolinate + NAD(+) + H2O = (2S,4S)-4-hydroxy-2,3,4,5-tetrahydrodipicolinate + NADH + H(+). It carries out the reaction (S)-2,3,4,5-tetrahydrodipicolinate + NADP(+) + H2O = (2S,4S)-4-hydroxy-2,3,4,5-tetrahydrodipicolinate + NADPH + H(+). Its pathway is amino-acid biosynthesis; L-lysine biosynthesis via DAP pathway; (S)-tetrahydrodipicolinate from L-aspartate: step 4/4. Functionally, catalyzes the conversion of 4-hydroxy-tetrahydrodipicolinate (HTPA) to tetrahydrodipicolinate. The sequence is that of 4-hydroxy-tetrahydrodipicolinate reductase from Ehrlichia canis (strain Jake).